The chain runs to 178 residues: Large ribosomal subunit protein uL6 (178 aa).

This sequence belongs to the universal ribosomal protein uL6 family. Part of the 50S ribosomal subunit.

Its function is as follows. This protein binds to the 23S rRNA, and is important in its secondary structure. It is located near the subunit interface in the base of the L7/L12 stalk, and near the tRNA binding site of the peptidyltransferase center. This Francisella tularensis subsp. tularensis (strain FSC 198) protein is Large ribosomal subunit protein uL6.